The sequence spans 167 residues: Photosystem I assembly protein Ycf3 (167 aa).

3 TPR repeats span residues alanine 35–proline 68, serine 72–leucine 105, and glycine 120–asparagine 153.

Belongs to the Ycf3 family.

Its subcellular location is the plastid. It is found in the chloroplast thylakoid membrane. Functionally, essential for the assembly of the photosystem I (PSI) complex. May act as a chaperone-like factor to guide the assembly of the PSI subunits. This Chara vulgaris (Common stonewort) protein is Photosystem I assembly protein Ycf3.